Consider the following 99-residue polypeptide: Plastocyanin B'/B'' (99 aa).

One can recognise a Plastocyanin-like domain in the interval 1 to 99; it reads IEVLLGSDDG…AGMVGKVTVN (99 aa). The Cu cation site is built by H37, C84, H87, and M92.

This sequence belongs to the plastocyanin family. Cu(2+) serves as cofactor.

The protein resides in the plastid. It localises to the chloroplast thylakoid membrane. Its function is as follows. Participates in electron transfer between P700 and the cytochrome b6-f complex in photosystem I. This chain is Plastocyanin B'/B'', found in Nicotiana tabacum (Common tobacco).